The primary structure comprises 205 residues: tRNA 2-(methylsulfanyl)-N(6)-isopentenyladenosine(37) hydroxylase (205 aa).

Residues Glu38, Glu69, His72, Glu122, Glu151, and His154 each coordinate Fe cation.

It belongs to the MiaE family. In terms of assembly, homodimer. It depends on Fe cation as a cofactor.

The enzyme catalyses 2-methylsulfanyl-N(6)-dimethylallyladenosine(37) in tRNA + AH2 + O2 = N(6)-[(2E)-4-hydroxy-3-methylbut-2-en-1-yl]-2-(methylsulfanyl)adenosine(37) in tRNA + A + H2O. It participates in tRNA modification; 2-methylthio-N-6-(cis-hydroxy)isopentenyl adenosine-tRNA biosynthesis. Involved in specific tRNA modification. Catalyzes the oxygen-dependent hydroxylation of 2-methylthio-N-6-isopentenyl adenosine (ms2i6A) to produce 2-methylthio-N-6-(cis-hydroxy)isopentenyl adenosine (ms2io6A) at position 37 in tRNAs. In Pseudomonas putida (strain ATCC 47054 / DSM 6125 / CFBP 8728 / NCIMB 11950 / KT2440), this protein is tRNA 2-(methylsulfanyl)-N(6)-isopentenyladenosine(37) hydroxylase.